A 91-amino-acid polypeptide reads, in one-letter code: Protein SPATA45 homolog (91 aa).

The segment at 42–91 (RADRKHDPNGFNSSVFKGASNQHQESSLDFATAEPEFHRERRHFPEKSEY) is disordered. Polar residues predominate over residues 51 to 70 (GFNSSVFKGASNQHQESSLD). Residues 76–91 (PEFHRERRHFPEKSEY) are compositionally biased toward basic and acidic residues.

The protein belongs to the SPATA45 family.

The polypeptide is Protein SPATA45 homolog (Nematostella vectensis (Starlet sea anemone)).